The sequence spans 576 residues: 2-succinyl-5-enolpyruvyl-6-hydroxy-3-cyclohexene-1-carboxylate synthase (576 aa).

This sequence belongs to the TPP enzyme family. MenD subfamily. Homodimer. Requires Mg(2+) as cofactor. Mn(2+) is required as a cofactor. Thiamine diphosphate serves as cofactor.

It catalyses the reaction isochorismate + 2-oxoglutarate + H(+) = 5-enolpyruvoyl-6-hydroxy-2-succinyl-cyclohex-3-ene-1-carboxylate + CO2. The protein operates within quinol/quinone metabolism; 1,4-dihydroxy-2-naphthoate biosynthesis; 1,4-dihydroxy-2-naphthoate from chorismate: step 2/7. Its pathway is quinol/quinone metabolism; menaquinone biosynthesis. Catalyzes the thiamine diphosphate-dependent decarboxylation of 2-oxoglutarate and the subsequent addition of the resulting succinic semialdehyde-thiamine pyrophosphate anion to isochorismate to yield 2-succinyl-5-enolpyruvyl-6-hydroxy-3-cyclohexene-1-carboxylate (SEPHCHC). This chain is 2-succinyl-5-enolpyruvyl-6-hydroxy-3-cyclohexene-1-carboxylate synthase, found in Aliivibrio fischeri (strain ATCC 700601 / ES114) (Vibrio fischeri).